The following is a 215-amino-acid chain: L-fuculose phosphate aldolase (215 aa).

Substrate contacts are provided by residues 28 to 29, 43 to 44, and 71 to 72; these read GN, TG, and SS. Residue Glu-73 is the Proton donor/acceptor of the active site. Zn(2+) contacts are provided by Glu-73, His-92, His-94, and His-155.

The protein belongs to the aldolase class II family. AraD/FucA subfamily. Homotetramer. Zn(2+) is required as a cofactor.

The enzyme catalyses L-fuculose 1-phosphate = (S)-lactaldehyde + dihydroxyacetone phosphate. The protein operates within carbohydrate degradation; L-fucose degradation; L-lactaldehyde and glycerone phosphate from L-fucose: step 3/3. In terms of biological role, involved in the degradation of L-fucose and D-arabinose. Catalyzes the reversible cleavage of L-fuculose 1-phosphate (Fuc1P) to yield dihydroxyacetone phosphate (DHAP) and L-lactaldehyde. This chain is L-fuculose phosphate aldolase, found in Escherichia coli O6:H1 (strain CFT073 / ATCC 700928 / UPEC).